The following is a 33-amino-acid chain: Dermaseptin-4 (33 aa).

L33 carries the leucine amide modification.

Expressed by the skin glands.

Its subcellular location is the secreted. In terms of biological role, has antiparasitic activity against trypomastigote form of T.cruzi (IC(50)=0.25 uM) in vitro but not against L.infantum. Probably acts by permeabilizing cell membranes. In vitro, shows no cytotoxicity against macrophages. Has antibacterial activity. This Pithecopus nordestinus (Northeastern Brazilian leaf frog) protein is Dermaseptin-4.